Reading from the N-terminus, the 205-residue chain is Large ribosomal subunit protein uL4 (205 aa).

The segment at 47-70 (TRAQKSRAEVSGGGKKPFRQKGTG) is disordered.

The protein belongs to the universal ribosomal protein uL4 family. In terms of assembly, part of the 50S ribosomal subunit.

One of the primary rRNA binding proteins, this protein initially binds near the 5'-end of the 23S rRNA. It is important during the early stages of 50S assembly. It makes multiple contacts with different domains of the 23S rRNA in the assembled 50S subunit and ribosome. Functionally, forms part of the polypeptide exit tunnel. The sequence is that of Large ribosomal subunit protein uL4 from Acinetobacter baylyi (strain ATCC 33305 / BD413 / ADP1).